Consider the following 1021-residue polypeptide: SWI/SNF-related matrix-associated actin-dependent regulator of chromatin subfamily A containing DEAD/H box 1 (1021 aa).

At Met1 the chain carries N-acetylmethionine. Disordered regions lie at residues 1-82 and 124-151; these read MNLF…SLSC and SEPS…EDLS. The segment covering 7 to 19 has biased composition (basic and acidic residues); sequence DRFRFEKRSKIEE. Residues 22–39 are compositionally biased toward low complexity; it reads EAAPQPSQARPSSPISLS. Thr54 is modified (phosphothreonine). Residue Ser57 is modified to Phosphoserine. Residue Lys77 forms a Glycyl lysine isopeptide (Lys-Gly) (interchain with G-Cter in SUMO2) linkage. Ser79, Ser124, Ser127, Ser132, Ser144, Ser145, and Ser151 each carry phosphoserine. Positions 156 to 198 constitute a CUE 1 domain; sequence LKDAKLQTLKELFPQRSDSDLLKLIESTSTMDGAIAAALLMFG. The tract at residues 201 to 246 is disordered; sequence GGGPRKRKLSSSSEEDDVNDDQSVKQPRGDRGEESNESAEASSNWE. Phosphoserine is present on residues Ser210, Ser213, Ser235, and Ser238. Residues 247–290 form the CUE 2 domain; sequence KQESIVLKLQKEFPNFDKQELREVLKEHEWMYTEALESLKVFAE. Residue Ser298 is modified to Phosphoserine. The tract at residues 329 to 366 is disordered; it reads VKPQNGFNKKRKKNVFNPKKAVEDSEYDSGSDAGSSLD. Glycyl lysine isopeptide (Lys-Gly) (interchain with G-Cter in SUMO2) cross-links involve residues Lys330 and Lys466. The Helicase ATP-binding domain maps to 504 to 672; sequence ALVHKHGLNG…MSLLNFVMPH (169 aa). Residue 516–524 participates in ATP binding; sequence ADEMGLGKT. Residues 623 to 626 carry the DEGH box motif; that stretch reads DEGH. Positions 716-733 match the Nuclear localization signal motif; it reads RRVKEEVLKLLPPKKDRI. Lys719 participates in a covalent cross-link: Glycyl lysine isopeptide (Lys-Gly) (interchain with G-Cter in SUMO2). One can recognise a Helicase C-terminal domain in the interval 853 to 1005; that stretch reads ALGCILSELK…MTTVDEADEG (153 aa). Residue 892-899 participates in ATP binding; sequence YLRLDGKT. A Glycyl lysine isopeptide (Lys-Gly) (interchain with G-Cter in SUMO2) cross-link involves residue Lys991. The DEAD box signature appears at 1000-1003; the sequence is DEAD.

The protein belongs to the SNF2/RAD54 helicase family. As to quaternary structure, binds to DNA preferentially in the vicinity of transcriptional start sites. Interacts with MSH2 and TRIM28. Part of a complex composed of TRIM28, HDAC1, HDAC2 and EHMT2. Interacts with PCNA.

The protein resides in the nucleus. It is found in the chromosome. It catalyses the reaction ATP + H2O = ADP + phosphate + H(+). Functionally, DNA helicase that possesses intrinsic ATP-dependent nucleosome-remodeling activity and is both required for DNA repair and heterochromatin organization. Promotes DNA end resection of double-strand breaks (DSBs) following DNA damage: probably acts by weakening histone DNA interactions in nucleosomes flanking DSBs. Required for the restoration of heterochromatin organization after replication. Acts at replication sites to facilitate the maintenance of heterochromatin by directing H3 and H4 histones deacetylation, H3 'Lys-9' trimethylation (H3K9me3) and restoration of silencing. The chain is SWI/SNF-related matrix-associated actin-dependent regulator of chromatin subfamily A containing DEAD/H box 1 (Smarcad1) from Mus musculus (Mouse).